The sequence spans 1221 residues: Coatomer subunit alpha (1221 aa).

9 WD repeats span residues 7-46 (TKASRVKGLSFHPTRPWILASLHSGSIHLYDYRIKTLLEK), 49-88 (EHEGPVRGINFHMTQPLFVSGGDDYKIKVWNYKQRRCLFT), 91-130 (GHKDYIRSVEFHREAPWIVSSSDDMVIRIWNWQSRTCIAE), 133-172 (GHNHYVMSALFHPKDDLVVSASLDQTIRIWDISGLKKKMT), 202-241 (GHDRGVNWASFHPTQPYIVSASDDHQVKLWRMNDPIVDTF), 243-282 (GHYNNVSCALFHPRQDLIISNSEDKTIRVWDIIKKSTVHM), 285-323 (RDHDRFWTLASHPNQNLFAAGHDSGMIVFKLERERPLFV), 358-399 (PSNN…SNTV), and 528-567 (WDDNGVFIYSTSNHLKYLLQNGDNGTIRTLESTIYITGVK). The disordered stretch occupies residues 820-885 (GVEQSTSTPT…DDGGWERDDL (66 aa)). The span at 844-857 (SQQQSSQQQQQQQQ) shows a compositional bias: low complexity. The WD 10 repeat unit spans residues 910–953 (PQPGPSFSMIWARNSQFAVDHIAAGSFESAMNILNSQIGAVNFD).

As to quaternary structure, oligomeric complex that consists of at least the alpha, beta, beta', gamma, delta, epsilon and zeta subunits.

It localises to the cytoplasm. It is found in the golgi apparatus membrane. Functionally, the coatomer is a cytosolic protein complex that binds to dilysine motifs and reversibly associates with Golgi non-clathrin-coated vesicles, which further mediate biosynthetic protein transport from the ER, via the Golgi up to the trans Golgi network. Coatomer complex is required for budding from Golgi membranes, and is essential for the retrograde Golgi-to-ER transport of dilysine-tagged proteins. This Dictyostelium discoideum (Social amoeba) protein is Coatomer subunit alpha (copa).